The sequence spans 90 residues: UPF0297 protein ABC1593 (90 aa).

Belongs to the UPF0297 family.

This is UPF0297 protein ABC1593 from Shouchella clausii (strain KSM-K16) (Alkalihalobacillus clausii).